A 147-amino-acid chain; its full sequence is uncharacterized protein (147 aa).

The 141-residue stretch at 7–147 folds into the N-acetyltransferase domain; it reads LEINYKTDEL…GHDVLVWAPK (141 aa).

This is an uncharacterized protein from Staphylococcus haemolyticus (strain JCSC1435).